A 78-amino-acid chain; its full sequence is MRSTTPINTTPINQLGYEACRDELIEVVRLLEQGGLNLDMSLKLWERGEQLAKRCEEHLDGARQRVADVLSARQVEEA.

It belongs to the XseB family. In terms of assembly, heterooligomer composed of large and small subunits.

The protein resides in the cytoplasm. The catalysed reaction is Exonucleolytic cleavage in either 5'- to 3'- or 3'- to 5'-direction to yield nucleoside 5'-phosphates.. Bidirectionally degrades single-stranded DNA into large acid-insoluble oligonucleotides, which are then degraded further into small acid-soluble oligonucleotides. The polypeptide is Exodeoxyribonuclease 7 small subunit (Mycobacterium leprae (strain TN)).